A 384-amino-acid chain; its full sequence is Beta-ureidopropionase (384 aa).

Positions 72–344 (VHVGLVQNRI…DGLLVAKLDL (273 aa)) constitute a CN hydrolase domain. Glu119 functions as the Proton acceptor in the catalytic mechanism. Catalysis depends on Lys196, which acts as the Proton donor. Cys233 acts as the Nucleophile in catalysis. A Phosphoserine modification is found at Ser378.

It belongs to the carbon-nitrogen hydrolase superfamily. BUP family. Homodimer, homotetramer, homooctamer; can also form higher homooligomers. As to expression, detected in liver (at protein level).

The protein localises to the cytoplasm. It carries out the reaction 3-(carbamoylamino)propanoate + H2O + 2 H(+) = beta-alanine + NH4(+) + CO2. The enzyme catalyses 3-(carbamoylamino)-2-methylpropanoate + H2O + 2 H(+) = (R)-3-amino-2-methylpropanoate + NH4(+) + CO2. It functions in the pathway amino-acid biosynthesis; beta-alanine biosynthesis. Strongly inhibited by 50 mM Zn(2+). Not inhibited by EDTA. Competitively inhibited by beta-alanine, 5-aminolevulinic acid (ALA), beta-aminoisobutyrate and 4-ureidobutyrate. Its function is as follows. Catalyzes a late step in pyrimidine degradation. Converts N-carbamoyl-beta-alanine (3-ureidopropanoate) into beta-alanine, ammonia and carbon dioxide. Likewise, converts N-carbamoyl-beta-aminoisobutyrate (3-ureidoisobutyrate) into beta-aminoisobutyrate, ammonia and carbon dioxide. The chain is Beta-ureidopropionase (UPB1) from Homo sapiens (Human).